We begin with the raw amino-acid sequence, 567 residues long: 2-succinyl-5-enolpyruvyl-6-hydroxy-3-cyclohexene-1-carboxylate synthase (567 aa).

Belongs to the TPP enzyme family. MenD subfamily. In terms of assembly, homodimer. Mg(2+) is required as a cofactor. Requires Mn(2+) as cofactor. The cofactor is thiamine diphosphate.

The enzyme catalyses isochorismate + 2-oxoglutarate + H(+) = 5-enolpyruvoyl-6-hydroxy-2-succinyl-cyclohex-3-ene-1-carboxylate + CO2. It functions in the pathway quinol/quinone metabolism; 1,4-dihydroxy-2-naphthoate biosynthesis; 1,4-dihydroxy-2-naphthoate from chorismate: step 2/7. Its pathway is quinol/quinone metabolism; menaquinone biosynthesis. Catalyzes the thiamine diphosphate-dependent decarboxylation of 2-oxoglutarate and the subsequent addition of the resulting succinic semialdehyde-thiamine pyrophosphate anion to isochorismate to yield 2-succinyl-5-enolpyruvyl-6-hydroxy-3-cyclohexene-1-carboxylate (SEPHCHC). The polypeptide is 2-succinyl-5-enolpyruvyl-6-hydroxy-3-cyclohexene-1-carboxylate synthase (Yersinia pseudotuberculosis serotype I (strain IP32953)).